The sequence spans 299 residues: 33 kDa chaperonin (299 aa).

2 disulfides stabilise this stretch: Cys-239-Cys-241 and Cys-272-Cys-275.

It belongs to the HSP33 family. In terms of processing, under oxidizing conditions two disulfide bonds are formed involving the reactive cysteines. Under reducing conditions zinc is bound to the reactive cysteines and the protein is inactive.

The protein resides in the cytoplasm. Functionally, redox regulated molecular chaperone. Protects both thermally unfolding and oxidatively damaged proteins from irreversible aggregation. Plays an important role in the bacterial defense system toward oxidative stress. The polypeptide is 33 kDa chaperonin (Acaryochloris marina (strain MBIC 11017)).